The primary structure comprises 360 residues: Photosystem II protein D1 (360 aa).

The next 3 helical transmembrane spans lie at 30–47 (YVGWFGVLMIPCLLAAAI), 119–134 (HFLIGICGWMGRQWEL), and 143–157 (WICVAYSAPVSAAFA). His119 serves as a coordination point for chlorophyll a. Trp127 contributes to the pheophytin a binding site. [CaMn4O5] cluster-binding residues include Asp171 and Glu190. A helical membrane pass occupies residues 198-219 (FHMAGVAGMFGGSLFSAMHGSL). A chlorophyll a-binding site is contributed by His199. Residues His216 and 265–266 (SF) each bind a quinone. Residue His216 participates in Fe cation binding. His273 lines the Fe cation pocket. Residues 275 to 289 (FLAIFPVVCVWLTSM) traverse the membrane as a helical segment. Residues His333, Glu334, Asp343, and Ala345 each coordinate [CaMn4O5] cluster. Positions 346–360 (AAESTSVALVAPSIG) are excised as a propeptide.

Belongs to the reaction center PufL/M/PsbA/D family. PSII is composed of 1 copy each of membrane proteins PsbA, PsbB, PsbC, PsbD, PsbE, PsbF, PsbH, PsbI, PsbJ, PsbK, PsbL, PsbM, PsbT, PsbX, PsbY, Psb30/Ycf12, peripheral proteins PsbO, CyanoQ (PsbQ), PsbU, PsbV and a large number of cofactors. It forms dimeric complexes. It depends on The D1/D2 heterodimer binds P680, chlorophylls that are the primary electron donor of PSII, and subsequent electron acceptors. It shares a non-heme iron and each subunit binds pheophytin, quinone, additional chlorophylls, carotenoids and lipids. D1 provides most of the ligands for the Mn4-Ca-O5 cluster of the oxygen-evolving complex (OEC). There is also a Cl(-1) ion associated with D1 and D2, which is required for oxygen evolution. The PSII complex binds additional chlorophylls, carotenoids and specific lipids. as a cofactor. In terms of processing, tyr-162 forms a radical intermediate that is referred to as redox-active TyrZ, YZ or Y-Z. Post-translationally, C-terminally processed by CtpA; processing is essential to allow assembly of the oxygen-evolving complex and thus photosynthetic growth.

The protein resides in the cellular thylakoid membrane. It carries out the reaction 2 a plastoquinone + 4 hnu + 2 H2O = 2 a plastoquinol + O2. In terms of biological role, photosystem II (PSII) is a light-driven water:plastoquinone oxidoreductase that uses light energy to abstract electrons from H(2)O, generating O(2) and a proton gradient subsequently used for ATP formation. It consists of a core antenna complex that captures photons, and an electron transfer chain that converts photonic excitation into a charge separation. The D1/D2 (PsbA/PsbD) reaction center heterodimer binds P680, the primary electron donor of PSII as well as several subsequent electron acceptors. The sequence is that of Photosystem II protein D1 from Prochlorococcus marinus (strain SARG / CCMP1375 / SS120).